Consider the following 212-residue polypeptide: Peptide methionine sulfoxide reductase MsrA (212 aa).

The active site involves Cys51.

It belongs to the MsrA Met sulfoxide reductase family.

The enzyme catalyses L-methionyl-[protein] + [thioredoxin]-disulfide + H2O = L-methionyl-(S)-S-oxide-[protein] + [thioredoxin]-dithiol. It catalyses the reaction [thioredoxin]-disulfide + L-methionine + H2O = L-methionine (S)-S-oxide + [thioredoxin]-dithiol. In terms of biological role, has an important function as a repair enzyme for proteins that have been inactivated by oxidation. Catalyzes the reversible oxidation-reduction of methionine sulfoxide in proteins to methionine. In Vibrio parahaemolyticus serotype O3:K6 (strain RIMD 2210633), this protein is Peptide methionine sulfoxide reductase MsrA.